We begin with the raw amino-acid sequence, 220 residues long: MQEGKKLLDFRRREMVETLKRYGITNQRVLKAFLEVPRHLFFEVEAWDAAYNDGAYPVGFGQTISQPYTVAFMTSLLVERSPSGKVLEIGTGSGYQAAILDALGYSVFSVERIVALYERAQQRFSRLGLHIACRFGDGTLGWKDEAPFDGIVVTAGAPKAPESLLQQLAENGCMIIPVGGSDAQQMTVIKREEGEFKRELFERFVFVPLVGREGWDDTVF.

S65 is an active-site residue.

The protein belongs to the methyltransferase superfamily. L-isoaspartyl/D-aspartyl protein methyltransferase family.

It localises to the cytoplasm. It catalyses the reaction [protein]-L-isoaspartate + S-adenosyl-L-methionine = [protein]-L-isoaspartate alpha-methyl ester + S-adenosyl-L-homocysteine. Its function is as follows. Catalyzes the methyl esterification of L-isoaspartyl residues in peptides and proteins that result from spontaneous decomposition of normal L-aspartyl and L-asparaginyl residues. It plays a role in the repair and/or degradation of damaged proteins. In Pelodictyon phaeoclathratiforme (strain DSM 5477 / BU-1), this protein is Protein-L-isoaspartate O-methyltransferase.